Reading from the N-terminus, the 376-residue chain is N-acetyldiaminopimelate deacetylase (376 aa).

Aspartate 69 is a catalytic residue. Glutamate 128 serves as the catalytic Proton acceptor.

It belongs to the peptidase M20A family. N-acetyldiaminopimelate deacetylase subfamily.

The catalysed reaction is N-acetyl-(2S,6S)-2,6-diaminopimelate + H2O = (2S,6S)-2,6-diaminopimelate + acetate. It participates in amino-acid biosynthesis; L-lysine biosynthesis via DAP pathway; LL-2,6-diaminopimelate from (S)-tetrahydrodipicolinate (acetylase route): step 3/3. Catalyzes the conversion of N-acetyl-diaminopimelate to diaminopimelate and acetate. This chain is N-acetyldiaminopimelate deacetylase, found in Bacillus cytotoxicus (strain DSM 22905 / CIP 110041 / 391-98 / NVH 391-98).